The chain runs to 142 residues: uncharacterized protein (142 aa).

Residues 1–22 (MSGSVNQNTDQHSQDSSSTPNN) form a disordered region. 2 helical membrane-spanning segments follow: residues 63–83 (LFVM…VLLV) and 109–129 (IIDG…FVDL).

Its subcellular location is the membrane. This is an uncharacterized protein from Acanthamoeba polyphaga mimivirus (APMV).